The primary structure comprises 172 residues: Cystatin-like cysteine protease inhibitor EPIC4 (172 aa).

Positions 1-17 (MRASLSILVAFPALAAA) are cleaved as a signal peptide. Positions 71-75 (QVVAG) match the Secondary area of contact motif. The tract at residues 129-172 (EAATASSSSTPAPTPASTSTSASSSEETMLQSSVQQRAMFSDFV) is disordered. Low complexity predominate over residues 130–156 (AATASSSSTPAPTPASTSTSASSSEET). Residues 157 to 166 (MLQSSVQQRA) show a composition bias toward polar residues.

It belongs to the cystatin family.

Its subcellular location is the secreted. Secreted effector that interacts with and inhibits host apoplastic pathogenesis-related papain-like cysteine proteases. Inhibition of host proteases by a pathogen extracellular protease inhibitor forms a specific type of defense-counterdefense mechanism between plants and microbial pathogens. This chain is Cystatin-like cysteine protease inhibitor EPIC4, found in Phytophthora infestans (Potato late blight agent).